The chain runs to 338 residues: Fructose-1,6-bisphosphatase class 1 (338 aa).

Residues glutamate 92, aspartate 114, leucine 116, and aspartate 117 each coordinate Mg(2+). Substrate-binding positions include 117–120 (DGSS) and asparagine 210. Glutamate 284 is a binding site for Mg(2+).

The protein belongs to the FBPase class 1 family. Homotetramer. Requires Mg(2+) as cofactor.

The protein localises to the cytoplasm. It catalyses the reaction beta-D-fructose 1,6-bisphosphate + H2O = beta-D-fructose 6-phosphate + phosphate. Its pathway is carbohydrate biosynthesis; gluconeogenesis. The protein is Fructose-1,6-bisphosphatase class 1 of Halorhodospira halophila (strain DSM 244 / SL1) (Ectothiorhodospira halophila (strain DSM 244 / SL1)).